The sequence spans 332 residues: HPr kinase/phosphorylase (332 aa).

Active-site residues include His153 and Lys174. Residue 168 to 175 participates in ATP binding; that stretch reads GKSGLGKS. Ser175 lines the Mg(2+) pocket. Asp192 serves as the catalytic Proton acceptor; for phosphorylation activity. Proton donor; for dephosphorylation activity. The interval 217 to 226 is important for the catalytic mechanism of both phosphorylation and dephosphorylation; that stretch reads MEIRGLGVVD. Residue Glu218 participates in Mg(2+) binding. Arg259 is an active-site residue. The important for the catalytic mechanism of dephosphorylation stretch occupies residues 280 to 285; the sequence is PIFPGK.

It belongs to the HPrK/P family. As to quaternary structure, homohexamer. Mg(2+) serves as cofactor.

The enzyme catalyses [HPr protein]-L-serine + ATP = [HPr protein]-O-phospho-L-serine + ADP + H(+). It carries out the reaction [HPr protein]-O-phospho-L-serine + phosphate + H(+) = [HPr protein]-L-serine + diphosphate. Functionally, catalyzes the ATP- as well as the pyrophosphate-dependent phosphorylation of a specific serine residue in HPr, a phosphocarrier protein of the phosphoenolpyruvate-dependent sugar phosphotransferase system (PTS). HprK/P also catalyzes the pyrophosphate-producing, inorganic phosphate-dependent dephosphorylation (phosphorolysis) of seryl-phosphorylated HPr (P-Ser-HPr). In Chlorobium phaeovibrioides (strain DSM 265 / 1930) (Prosthecochloris vibrioformis (strain DSM 265)), this protein is HPr kinase/phosphorylase.